The chain runs to 113 residues: uncharacterized protein (113 aa).

Residues 78–113 are disordered; it reads YCNRGSERTNQGNRGSAPSKILLPRTIADPFRGGPE.

This is an uncharacterized protein from Halobacterium phage phiH (Bacteriophage phi-H).